Reading from the N-terminus, the 163-residue chain is Lipoprotein signal peptidase (163 aa).

4 helical membrane passes run Tyr9–Ser29, Val39–Ala59, Trp67–Ser87, and Leu92–Val112. Catalysis depends on residues Asp119 and Asp137. The chain crosses the membrane as a helical span at residues Trp130–Gly150.

The protein belongs to the peptidase A8 family.

Its subcellular location is the cell inner membrane. The catalysed reaction is Release of signal peptides from bacterial membrane prolipoproteins. Hydrolyzes -Xaa-Yaa-Zaa-|-(S,diacylglyceryl)Cys-, in which Xaa is hydrophobic (preferably Leu), and Yaa (Ala or Ser) and Zaa (Gly or Ala) have small, neutral side chains.. It participates in protein modification; lipoprotein biosynthesis (signal peptide cleavage). This protein specifically catalyzes the removal of signal peptides from prolipoproteins. This is Lipoprotein signal peptidase from Polynucleobacter necessarius subsp. necessarius (strain STIR1).